The following is a 58-amino-acid chain: Large ribosomal subunit protein uL30 (58 aa).

It belongs to the universal ribosomal protein uL30 family. Part of the 50S ribosomal subunit.

The polypeptide is Large ribosomal subunit protein uL30 (Pseudomonas fluorescens (strain ATCC BAA-477 / NRRL B-23932 / Pf-5)).